The following is an 828-amino-acid chain: Outer membrane usher protein MrkC (828 aa).

The signal sequence occupies residues 1 to 18 (MKQRSICPGRLSTAIAVA). Cys813 and Cys827 are oxidised to a cystine.

Belongs to the fimbrial export usher family.

The protein resides in the cell outer membrane. Its function is as follows. Involved in the export and assembly of the type 3 fimbrial subunit (MrkA). The protein is Outer membrane usher protein MrkC (mrkC) of Klebsiella pneumoniae.